Here is a 242-residue protein sequence, read N- to C-terminus: Probable transcriptional regulatory protein Bphy_2064 (242 aa).

It belongs to the TACO1 family.

Its subcellular location is the cytoplasm. The polypeptide is Probable transcriptional regulatory protein Bphy_2064 (Paraburkholderia phymatum (strain DSM 17167 / CIP 108236 / LMG 21445 / STM815) (Burkholderia phymatum)).